The following is a 361-amino-acid chain: Free fatty acid receptor 4 (361 aa).

Over 1–45 the chain is Extracellular; it reads MSPECARAAGDAPLRSLEQANRTRFPFFSDVKGDHRLVLAAVETT. Asparagine 21 carries N-linked (GlcNAc...) asparagine glycosylation. The chain crosses the membrane as a helical span at residues 46–66; that stretch reads VLVLIFAVSLLGNVCALVLVA. Over 67–77 the chain is Cytoplasmic; it reads RRRRRGATACL. Residues 78–98 form a helical membrane-spanning segment; it reads VLNLFCADLLFISAIPLVLAV. The Extracellular portion of the chain corresponds to 99-112; sequence RWTEAWLLGPVACH. Residues cysteine 111 and cysteine 194 are joined by a disulfide bond. A helical membrane pass occupies residues 113 to 133; sequence LLFYVMTLSGSVTILTLAAVS. At 134–156 the chain is on the cytoplasmic side; the sequence is LERMVCIVHLQRGVRGPGRRARA. The chain crosses the membrane as a helical span at residues 157-177; it reads VLLALIWGYSAVAALPLCVFF. Residues 178–204 are Extracellular-facing; that stretch reads RVVPQRLPGADQEISICTLIWPTIPGE. The chain crosses the membrane as a helical span at residues 205–225; sequence ISWDVSFVTLNFLVPGLVIVI. The Cytoplasmic portion of the chain corresponds to 226–268; sequence SYSKILQITKASRKRLTVSLAYSESHQIRVSQQDFRLFRTLFL. A helical transmembrane segment spans residues 269-289; the sequence is LMVSFFIMWSPIIITILLILI. The Extracellular portion of the chain corresponds to 290-295; the sequence is QNFKQD. A helical membrane pass occupies residues 296–316; sequence LVIWPSLFFWVVAFTFANSAL. Topologically, residues 317-361 are cytoplasmic; that stretch reads NPILYNMTLCRNEWKKIFCCFWFPEKGAILTDTSVKRNDLSIISG. Phosphothreonine occurs at positions 347 and 349. Phosphoserine occurs at positions 350, 357, and 360.

This sequence belongs to the G-protein coupled receptor 1 family. Interacts (via C-terminus) with ARRB2 following LCFAs stimulation. In terms of processing, phosphorylated at two clusters of Ser and Thr residues located in the intracellular C-terminus, a prerequisite for FFAR4 internalization via an ARRB2-dependent pathway. In terms of tissue distribution, the predominant isoform in human tissues. Expressed in adipose tissue, pancreatic islets, lung and brain. Expressed in alpha cells of pancreatic islets. Expressed in primary cilia of perivascular preadipocytes of white adipose tissue (at protein level). As to expression, abundant expression in the intestinal tract. Expressed in colonic intraepithelial neuroendocrine cells.

It localises to the cell membrane. The protein resides in the endosome membrane. It is found in the lysosome membrane. The protein localises to the cell projection. Its subcellular location is the cilium membrane. G-protein-coupled receptor for long-chain fatty acids (LCFAs) with a major role in adipogenesis, energy metabolism and inflammation. Signals via G-protein and beta-arrestin pathways. LCFAs sensing initiates activation of phosphoinositidase C-linked G proteins GNAQ and GNA11 (G(q)/G(11)), inducing a variety of cellular responses via second messenger pathways such as intracellular calcium mobilization, modulation of cyclic adenosine monophosphate (cAMP) production, and mitogen-activated protein kinases (MAPKs). After LCFAs binding, associates with beta-arrestin ARRB2 that acts as an adapter protein coupling the receptor to specific downstream signaling pathways, as well as mediating receptor endocytosis. In response to dietary fats, plays an important role in the regulation of adipocyte proliferation and differentiation. Acts as a receptor for omega-3 polyunsaturated fatty acids (PUFAs) at primary cilium of perivascular preadipocytes, initiating an adipogenic program via cAMP and CTCF-dependent chromatin remodeling that ultimately results in transcriptional activation of adipogenic genes and cell cycle entry. Induces differentiation of brown adipocytes probably via autocrine and endocrine functions of FGF21 hormone. Activates brown adipocytes by initiating intracellular calcium signaling that leads to mitochondrial depolarization and fission, and overall increased mitochondrial respiration. Consequently stimulates fatty acid uptake and oxidation in mitochondria together with UCP1-mediated thermogenic respiration, eventually reducing fat mass. Regulates bi-potential differentiation of bone marrow mesenchymal stem cells toward osteoblasts or adipocytes likely by up-regulating distinct integrins. In response to dietary fats regulates hormone secretion and appetite. Stimulates GIP and GLP1 secretion from enteroendocrine cells as well as GCG secretion in pancreatic alpha cells, thereby playing a role in the regulation of blood glucose levels. Negatively regulates glucose-induced SST secretion in pancreatic delta cells. Mediates LCFAs inhibition of GHRL secretion, an appetite-controlling hormone. In taste buds, contributes to sensing of dietary fatty acids by the gustatory system. During the inflammatory response, promotes anti-inflammatory M2 macrophage differentiation in adipose tissue. Mediates the anti-inflammatory effects of omega-3 PUFAs via inhibition of NLRP3 inflammasome activation. In this pathway, interacts with adapter protein ARRB2 and inhibits the priming step triggered by Toll-like receptors (TLRs) at the level of TAK1 and TAB1. Further inhibits the activation step when ARRB2 directly associates with NLRP3, leading to inhibition of pro-inflammatory cytokine release. Mediates LCFAs anti-apoptotic effects. In terms of biological role, receptor for LCFAs decoupled from G-protein signaling. May signal through beta-arrestin pathway. After LCFAs binding, associates with beta-arrestin ARRB2 that may act as an adapter protein coupling the receptor to specific downstream signaling pathways, as well as mediating receptor endocytosis. The protein is Free fatty acid receptor 4 of Homo sapiens (Human).